The following is a 348-amino-acid chain: Dihydroorotase (348 aa).

Residues His-17 and His-19 each contribute to the Zn(2+) site. Substrate is bound by residues 19–21 (HLR) and Asn-45. Zn(2+)-binding residues include Lys-103, His-140, and His-178. At Lys-103 the chain carries N6-carboxylysine. His-140 contributes to the substrate binding site. Residue Leu-223 participates in substrate binding. Residue Asp-251 coordinates Zn(2+). Residue Asp-251 is part of the active site. Substrate contacts are provided by His-255 and Ala-267.

Belongs to the metallo-dependent hydrolases superfamily. DHOase family. Class II DHOase subfamily. As to quaternary structure, homodimer. Zn(2+) serves as cofactor.

The enzyme catalyses (S)-dihydroorotate + H2O = N-carbamoyl-L-aspartate + H(+). The protein operates within pyrimidine metabolism; UMP biosynthesis via de novo pathway; (S)-dihydroorotate from bicarbonate: step 3/3. Functionally, catalyzes the reversible cyclization of carbamoyl aspartate to dihydroorotate. The protein is Dihydroorotase of Salmonella agona (strain SL483).